Reading from the N-terminus, the 93-residue chain is Large ribosomal subunit protein bL27 (93 aa).

Positions 1–8 are excised as a propeptide; it reads MIMDLQFF. The tract at residues 8 to 29 is disordered; the sequence is FSHHKGGGSTANGRNSAGRRLG.

This sequence belongs to the bacterial ribosomal protein bL27 family. The N-terminus is cleaved by ribosomal processing cysteine protease Prp.

The polypeptide is Large ribosomal subunit protein bL27 (Limosilactobacillus fermentum (strain NBRC 3956 / LMG 18251) (Lactobacillus fermentum)).